The primary structure comprises 551 residues: Glucans biosynthesis protein D (551 aa).

The tat-type signal signal peptide spans 1 to 32; it reads MDRRRFIKGSMAMAAVCGTSGIASLFSQAAFA.

This sequence belongs to the OpgD/OpgG family. Predicted to be exported by the Tat system. The position of the signal peptide cleavage has not been experimentally proven.

The protein localises to the periplasm. It functions in the pathway glycan metabolism; osmoregulated periplasmic glucan (OPG) biosynthesis. In terms of biological role, probably involved in the control of the structural glucose backbone of osmoregulated periplasmic glucans (OPGs). This chain is Glucans biosynthesis protein D, found in Escherichia coli (strain K12 / MC4100 / BW2952).